Reading from the N-terminus, the 313-residue chain is Olfactory receptor 1D2 (313 aa).

Over 1–25 the chain is Extracellular; sequence MDGGNQSEGSEFLLLGMSESPEQQR. N-linked (GlcNAc...) asparagine glycosylation is present at asparagine 5. Residues 26–49 traverse the membrane as a helical segment; sequence ILFWMFLSMYLVTVLGNVLIILAI. Topologically, residues 50 to 57 are cytoplasmic; sequence SSDSRLHT. Residues 58–79 traverse the membrane as a helical segment; that stretch reads PMYFFLANLSFTDLFFVTNTIP. Residues 80 to 100 are Extracellular-facing; the sequence is KMLVNLQSQDKAISYAGCLTQ. Cysteine 97 and cysteine 189 are joined by a disulfide. Residues 101-120 traverse the membrane as a helical segment; the sequence is LYFLLSLVTLDNLILAVMAY. Residues 121–139 lie on the Cytoplasmic side of the membrane; that stretch reads DRYVAICCPLHYVTAMSPR. The chain crosses the membrane as a helical span at residues 140–158; that stretch reads LCILLLSLCWVFSVLYGLI. The Extracellular portion of the chain corresponds to 159-196; that stretch reads HTLLMTRVTFCGSRKIHYLFCEMYFLLRLACSNIQINH. N-linked (GlcNAc...) asparagine glycosylation occurs at asparagine 195. The helical transmembrane segment at 197 to 219 threads the bilayer; that stretch reads TVLXATGCFIFLIPLGFMIXSYA. Topologically, residues 220 to 236 are cytoplasmic; that stretch reads RIVRAILRIPSATGKYK. Residues 237-259 traverse the membrane as a helical segment; that stretch reads AFSTCASHLAVVSLFYGTLGMVY. At 260–271 the chain is on the extracellular side; it reads LQPLQTYSTKDS. A helical membrane pass occupies residues 272–291; it reads VATVMYAVVTPMMNPFIYSL. Topologically, residues 292-313 are cytoplasmic; that stretch reads RNKDIHGALGRLLQGKAFQKLT.

This sequence belongs to the G-protein coupled receptor 1 family.

It localises to the cell membrane. In terms of biological role, odorant receptor. This is Olfactory receptor 1D2 (OR1D2) from Pongo pygmaeus (Bornean orangutan).